A 222-amino-acid chain; its full sequence is Kunitz trypsin inhibitor 3 (222 aa).

A signal peptide spans 1-23 (MEKLTLSFITLTVLSAIFTAASA). A glycan (N-linked (GlcNAc...) asparagine) is linked at Asn65. 2 disulfide bridges follow: Cys72–Cys119 and Cys165–Cys173. Asn175 carries an N-linked (GlcNAc...) asparagine glycan.

Belongs to the protease inhibitor I3 (leguminous Kunitz-type inhibitor) family.

In terms of biological role, exhibits Kunitz trypsin protease inhibitor activity. The sequence is that of Kunitz trypsin inhibitor 3 from Arabidopsis thaliana (Mouse-ear cress).